We begin with the raw amino-acid sequence, 218 residues long: Dehydration-responsive element-binding protein 1B (218 aa).

The tract at residues 1-26 is disordered; the sequence is MEVEEAAYRTVWSEPPKRPAGRTKFR. Residues 32 to 95 constitute a DNA-binding region (AP2/ERF); it reads VYRGVRRRGG…RGRAACLNFA (64 aa). Residues 131–151 are disordered; it reads SAAPSSPAETFADDGDEEEDN. The segment covering 141–151 has biased composition (acidic residues); that stretch reads FADDGDEEEDN.

This sequence belongs to the AP2/ERF transcription factor family. ERF subfamily.

The protein localises to the nucleus. In terms of biological role, transcriptional activator that binds specifically to the DNA sequence 5'-[AG]CCGAC-3'. Binding to the C-repeat/DRE element mediates high salinity- and dehydration-inducible transcription. Confers resistance to high salt, cold and drought stress. This chain is Dehydration-responsive element-binding protein 1B (DREB1B), found in Oryza sativa subsp. indica (Rice).